The sequence spans 154 residues: Myoglobin (154 aa).

In terms of domain architecture, Globin spans 2–148 (GLSDGEWQLV…FRKDMASNYK (147 aa)). At S4 the chain carries Phosphoserine. H65 is a nitrite binding site. An O2-binding site is contributed by H65. Phosphothreonine is present on T68. Heme b is bound at residue H94.

The protein belongs to the globin family. Monomeric.

The protein localises to the cytoplasm. It localises to the sarcoplasm. It carries out the reaction Fe(III)-heme b-[protein] + nitric oxide + H2O = Fe(II)-heme b-[protein] + nitrite + 2 H(+). It catalyses the reaction H2O2 + AH2 = A + 2 H2O. Monomeric heme protein which primary function is to store oxygen and facilitate its diffusion within muscle tissues. Reversibly binds oxygen through a pentacoordinated heme iron and enables its timely and efficient release as needed during periods of heightened demand. Depending on the oxidative conditions of tissues and cells, and in addition to its ability to bind oxygen, it also has a nitrite reductase activity whereby it regulates the production of bioactive nitric oxide. Under stress conditions, like hypoxia and anoxia, it also protects cells against reactive oxygen species thanks to its pseudoperoxidase activity. This is Myoglobin (MB) from Pongo pygmaeus (Bornean orangutan).